The sequence spans 141 residues: Nucleoside diphosphate kinase (141 aa).

6 residues coordinate ATP: Lys11, Phe59, Arg87, Thr93, Arg104, and Asn114. His117 (pros-phosphohistidine intermediate) is an active-site residue.

The protein belongs to the NDK family. As to quaternary structure, homotetramer. It depends on Mg(2+) as a cofactor.

It localises to the cytoplasm. The catalysed reaction is a 2'-deoxyribonucleoside 5'-diphosphate + ATP = a 2'-deoxyribonucleoside 5'-triphosphate + ADP. It carries out the reaction a ribonucleoside 5'-diphosphate + ATP = a ribonucleoside 5'-triphosphate + ADP. In terms of biological role, major role in the synthesis of nucleoside triphosphates other than ATP. The ATP gamma phosphate is transferred to the NDP beta phosphate via a ping-pong mechanism, using a phosphorylated active-site intermediate. The chain is Nucleoside diphosphate kinase from Stenotrophomonas maltophilia (strain R551-3).